The primary structure comprises 843 residues: Excretory canal abnormal protein 6 (843 aa).

Disordered stretches follow at residues 54–135 (QLKD…EKKT), 568–601 (TLES…PAKT), 748–767 (TPLS…MTAE), and 773–843 (TMKP…PKWV). 2 stretches are compositionally biased toward pro residues: residues 66 to 76 (TPPPPPPPPPL) and 83 to 103 (APPP…PPPI). Residues 127 to 512 (FLPKKEKKTK…KEEKKETQTT (386 aa)) form the FH2 domain. 2 stretches are compositionally biased toward polar residues: residues 776 to 792 (PSVS…TSSH) and 819 to 830 (IPQSPTVTSSAR).

Belongs to the formin homology family. In terms of tissue distribution, expressed in the excretory cell and mostly accumulates at the tip of the excretory cell canals.

The protein localises to the cytoplasm. It is found in the cytoskeleton. In terms of biological role, constitutively active protein required for microtubule and F-actin growth, structural maintenance and organization during excretory cell tubulogenesis. This Caenorhabditis elegans protein is Excretory canal abnormal protein 6.